Here is a 567-residue protein sequence, read N- to C-terminus: Oxygen-dependent choline dehydrogenase (567 aa).

An FAD-binding site is contributed by 4–33 (DYIIIGAGSAGNVLAARLTEDADVTVLLLE). The active-site Proton acceptor is His473.

It belongs to the GMC oxidoreductase family. The cofactor is FAD.

It carries out the reaction choline + A = betaine aldehyde + AH2. The catalysed reaction is betaine aldehyde + NAD(+) + H2O = glycine betaine + NADH + 2 H(+). It functions in the pathway amine and polyamine biosynthesis; betaine biosynthesis via choline pathway; betaine aldehyde from choline (cytochrome c reductase route): step 1/1. Involved in the biosynthesis of the osmoprotectant glycine betaine. Catalyzes the oxidation of choline to betaine aldehyde and betaine aldehyde to glycine betaine at the same rate. The chain is Oxygen-dependent choline dehydrogenase from Yersinia pseudotuberculosis serotype O:1b (strain IP 31758).